The sequence spans 335 residues: Holliday junction branch migration complex subunit RuvB (335 aa).

Positions 1-183 (MDERIISSET…FGVIDHLEFY (183 aa)) are large ATPase domain (RuvB-L). ATP-binding positions include leucine 22, arginine 23, glycine 64, lysine 67, threonine 68, threonine 69, 130–132 (EDY), arginine 173, tyrosine 183, and arginine 220. Threonine 68 lines the Mg(2+) pocket. The interval 184-254 (TEEQLTEIVL…LAKEALTLLQ (71 aa)) is small ATPAse domain (RuvB-S). The tract at residues 257 to 335 (PRGLDTIDQK…HLGISYEKEV (79 aa)) is head domain (RuvB-H). Arginine 293, arginine 312, and arginine 317 together coordinate DNA.

Belongs to the RuvB family. As to quaternary structure, homohexamer. Forms an RuvA(8)-RuvB(12)-Holliday junction (HJ) complex. HJ DNA is sandwiched between 2 RuvA tetramers; dsDNA enters through RuvA and exits via RuvB. An RuvB hexamer assembles on each DNA strand where it exits the tetramer. Each RuvB hexamer is contacted by two RuvA subunits (via domain III) on 2 adjacent RuvB subunits; this complex drives branch migration. In the full resolvosome a probable DNA-RuvA(4)-RuvB(12)-RuvC(2) complex forms which resolves the HJ.

It localises to the cytoplasm. It catalyses the reaction ATP + H2O = ADP + phosphate + H(+). In terms of biological role, the RuvA-RuvB-RuvC complex processes Holliday junction (HJ) DNA during genetic recombination and DNA repair, while the RuvA-RuvB complex plays an important role in the rescue of blocked DNA replication forks via replication fork reversal (RFR). RuvA specifically binds to HJ cruciform DNA, conferring on it an open structure. The RuvB hexamer acts as an ATP-dependent pump, pulling dsDNA into and through the RuvAB complex. RuvB forms 2 homohexamers on either side of HJ DNA bound by 1 or 2 RuvA tetramers; 4 subunits per hexamer contact DNA at a time. Coordinated motions by a converter formed by DNA-disengaged RuvB subunits stimulates ATP hydrolysis and nucleotide exchange. Immobilization of the converter enables RuvB to convert the ATP-contained energy into a lever motion, pulling 2 nucleotides of DNA out of the RuvA tetramer per ATP hydrolyzed, thus driving DNA branch migration. The RuvB motors rotate together with the DNA substrate, which together with the progressing nucleotide cycle form the mechanistic basis for DNA recombination by continuous HJ branch migration. Branch migration allows RuvC to scan DNA until it finds its consensus sequence, where it cleaves and resolves cruciform DNA. The chain is Holliday junction branch migration complex subunit RuvB from Listeria monocytogenes serotype 4b (strain CLIP80459).